A 225-amino-acid chain; its full sequence is MKVPVLIINMKAYPELLGGGAVKLAQVAEKVANNLGASIIVAPPHTYLRQVAESVNIPVYAQSADPVDPGARTGHIPLEFIKDAGASGVIINHSEHRLLLNDIAMLVNKAKALNLETVVCSPDPLSSAAAAALAPTAVAMEPPELIGTGKSVSRTKPDVVVETVNAVKRVNGDVKVITGAGIEDYNDVAKAIELGTVGVLVASAIVKAKDWEAKITELAKPLVGK.

9–11 (NMK) is a binding site for substrate. Histidine 93 serves as the catalytic Electrophile. The Proton acceptor role is filled by glutamate 141. Substrate-binding positions include isoleucine 146, glycine 181, and 202–203 (AS).

It belongs to the triosephosphate isomerase family. In terms of assembly, homotetramer; dimer of dimers.

Its subcellular location is the cytoplasm. It catalyses the reaction D-glyceraldehyde 3-phosphate = dihydroxyacetone phosphate. It functions in the pathway carbohydrate biosynthesis; gluconeogenesis. The protein operates within carbohydrate degradation; glycolysis; D-glyceraldehyde 3-phosphate from glycerone phosphate: step 1/1. Functionally, involved in the gluconeogenesis. Catalyzes stereospecifically the conversion of dihydroxyacetone phosphate (DHAP) to D-glyceraldehyde-3-phosphate (G3P). This chain is Triosephosphate isomerase, found in Caldivirga maquilingensis (strain ATCC 700844 / DSM 13496 / JCM 10307 / IC-167).